We begin with the raw amino-acid sequence, 1144 residues long: PAN2-PAN3 deadenylation complex catalytic subunit PAN2 (1144 aa).

WD repeat units lie at residues 27–66 (KKEK…YTRH), 153–193 (SSTY…VIHS), 196–233 (GHSA…NVYD), and 302–341 (HPCK…SGFT). The linker stretch occupies residues 344–481 (AAVLEYQDYP…LLEYKPSNNI (138 aa)). Residues 482–887 (DIPPAYSKLQ…TPEIVVYSDA (406 aa)) enclose the USP domain. Positions 939–1110 (VALDAEFVSL…EDAHTALLLY (172 aa)) constitute an Exonuclease domain. A divalent metal cation contacts are provided by D942, E944, D1051, and D1102.

This sequence belongs to the peptidase C19 family. PAN2 subfamily. As to quaternary structure, forms a heterotrimer with an asymmetric homodimer of the regulatory subunit PAN3 to form the poly(A)-nuclease (PAN) deadenylation complex. Requires a divalent metal cation as cofactor.

It localises to the cytoplasm. It carries out the reaction Exonucleolytic cleavage of poly(A) to 5'-AMP.. With respect to regulation, positively regulated by the regulatory subunit PAN3. Catalytic subunit of the poly(A)-nuclease (PAN) deadenylation complex, one of two cytoplasmic mRNA deadenylases involved in mRNA turnover. PAN specifically shortens poly(A) tails of RNA and the activity is stimulated by poly(A)-binding protein PAB1. PAN deadenylation is followed by rapid degradation of the shortened mRNA tails by the CCR4-NOT complex. Deadenylated mRNAs are then degraded by two alternative mechanisms, namely exosome-mediated 3'-5' exonucleolytic degradation, or deadenylation-dependent mRNA decaping and subsequent 5'-3' exonucleolytic degradation by XRN1. May also be involved in post-transcriptional maturation of mRNA poly(A) tails. The polypeptide is PAN2-PAN3 deadenylation complex catalytic subunit PAN2 (Kluyveromyces lactis (strain ATCC 8585 / CBS 2359 / DSM 70799 / NBRC 1267 / NRRL Y-1140 / WM37) (Yeast)).